Reading from the N-terminus, the 581-residue chain is Suppressor of cytokine signaling 7 (581 aa).

Disordered regions lie at residues 1–23, 89–109, 123–272, and 297–316; these read MVFR…EPGP, PPPP…DPTE, EAES…RTQS, and QRGL…RRSL. 3 stretches are compositionally biased toward pro residues: residues 89 to 99, 154 to 164, and 187 to 198; these read PPPPQPQPPAA, PPGPELPPVPF, and QPPPPPPPPGPL. The tract at residues 124–494 is mediates interaction with SORBS3; that stretch reads AESLETNSCS…GKFLYFLRSR (371 aa). A compositionally biased stretch (basic residues) spans 208-219; the sequence is GSFKIRLSRLFR. Residues 303–313 are compositionally biased toward pro residues; the sequence is PHPPTPPPPPR. The SH2 domain maps to 400–509; sequence WYWGPMNWED…PTPVQLLYPV (110 aa). Residues 504 to 554 form the SOCS box domain; sequence QLLYPVSRFSNVKSLQHLCRFRIRQLVRIDHIPDLPLPKPLISYIRKFYYY.

Substrate-recognition component of the ECS(SOCS7) complex, composed of SOCS7, CUL5, ELOB, ELOC and RNF7/RBX2. Interacts, via the third proline-rich region, with the second SH3 domain of the adapter protein NCK1. Also interacts with GRB2, INSR, PLCG1, SORBS3/vinexin, and phosphorylated STAT3 and STAT5. Interacts with SEPT6. Interacts with phosphorylated IRS4 and PIK3R1. Expressed in brain and leukocytes. Also in fetal lung fibroblasts and fetal brain.

It localises to the cytoplasm. The protein localises to the nucleus. It is found in the cell membrane. The protein operates within protein modification; protein ubiquitination. Functionally, substrate-recognition component of a cullin-5-RING E3 ubiquitin-protein ligase complex (ECS complex, also named CRL5 complex), which mediates the ubiquitination and subsequent proteasomal degradation of target proteins, such as DAB1 and IRS1. Specifically recognizes and binds phosphorylated proteins via its SH2 domain, promoting their ubiquitination. The ECS(SOCS7) complex acts as a key regulator of reelin signaling by mediating ubiquitination and degradation of phosphorylated DAB1 in the cortical plate of the developing cerebral cortex, thereby regulating neuron positioning during cortex development. Functions in insulin signaling and glucose homeostasis through IRS1 ubiquitination and subsequent proteasomal degradation. Also inhibits prolactin, growth hormone and leptin signaling by preventing STAT3 and STAT5 activation, sequestering them in the cytoplasm and reducing their binding to DNA. The polypeptide is Suppressor of cytokine signaling 7 (Homo sapiens (Human)).